Reading from the N-terminus, the 221-residue chain is Iron-sulfur cluster repair protein YtfE (221 aa).

This sequence belongs to the RIC family. YtfE subfamily. As to quaternary structure, homodimer.

The protein localises to the cytoplasm. Its function is as follows. Di-iron-containing protein involved in the repair of iron-sulfur clusters damaged by oxidative and nitrosative stress conditions. The polypeptide is Iron-sulfur cluster repair protein YtfE (Pectobacterium carotovorum subsp. carotovorum (strain PC1)).